Consider the following 88-residue polypeptide: MSKKLFIGSSLLSKEQTGSVEFQISHLTNRVLKLTDHLKFHDKDYSSQRGLLKILGKRKRLLSYLSKTNLTSYETLINKLNIRKLKNR.

The protein belongs to the universal ribosomal protein uS15 family. Part of the 30S ribosomal subunit.

Its subcellular location is the plastid. It localises to the chloroplast. The sequence is that of Small ribosomal subunit protein uS15c (rps15) from Physcomitrium patens (Spreading-leaved earth moss).